The chain runs to 200 residues: Small ribosomal subunit protein eS1 (200 aa).

The protein belongs to the eukaryotic ribosomal protein eS1 family.

The sequence is that of Small ribosomal subunit protein eS1 from Thermococcus gammatolerans (strain DSM 15229 / JCM 11827 / EJ3).